Consider the following 472-residue polypeptide: Homeobox protein PKNOX2 (472 aa).

The disordered stretch occupies residues 1–62 (MMQHASPAPA…STPVPSAPID (62 aa)). Over residues 26–38 (DSPQMTATTQPPS) the composition is skewed to polar residues. Over residues 46–56 (SAPSAAASTPV) the composition is skewed to low complexity. The MEIS N-terminal domain maps to 96-179 (GSECITSASF…MHSDNLLRND (84 aa)). The segment at residues 291-350 (KRGVLPKHATNIMRSWLFQHLMHPYPTEDEKRQIAAQTNLTLLQVNNWFVNARRRILQPM) is a DNA-binding region (homeobox). 3 disordered regions span residues 351 to 371 (LDAS…QHRP), 386 to 405 (QQQG…LDNL), and 423 to 472 (AAHD…DSLV). Basic residues predominate over residues 361-371 (KAKKIKSQHRP). The span at 396 to 405 (PDGSINLDNL) shows a compositional bias: polar residues. Over residues 429-454 (LDGTEEEDEDEMEEEEEEELEEEVDE) the composition is skewed to acidic residues.

It belongs to the TALE/MEIS homeobox family.

The protein localises to the nucleus. The polypeptide is Homeobox protein PKNOX2 (PKNOX2) (Pongo abelii (Sumatran orangutan)).